Reading from the N-terminus, the 289-residue chain is Shikimate dehydrogenase (NADP(+)) (289 aa).

Shikimate contacts are provided by residues Ser-20–Ser-22 and Ser-67. Catalysis depends on Lys-71, which acts as the Proton acceptor. The shikimate site is built by Asn-92 and Asp-107. Residues Gly-132–Ala-136 and Val-230 each bind NADP(+). Tyr-232 contacts shikimate. Gly-253 serves as a coordination point for NADP(+).

This sequence belongs to the shikimate dehydrogenase family. In terms of assembly, homodimer.

The enzyme catalyses shikimate + NADP(+) = 3-dehydroshikimate + NADPH + H(+). The protein operates within metabolic intermediate biosynthesis; chorismate biosynthesis; chorismate from D-erythrose 4-phosphate and phosphoenolpyruvate: step 4/7. Its function is as follows. Involved in the biosynthesis of the chorismate, which leads to the biosynthesis of aromatic amino acids. Catalyzes the reversible NADPH linked reduction of 3-dehydroshikimate (DHSA) to yield shikimate (SA). The polypeptide is Shikimate dehydrogenase (NADP(+)) (Streptococcus mutans serotype c (strain ATCC 700610 / UA159)).